A 342-amino-acid polypeptide reads, in one-letter code: MSKRVRSSLILPAVCGLGLAAVLLSSCSSKAPQQPARQAGISGPGDYSRPHRDGAPWWDVDVSRIPDAVPMPHNGSVKANPYTVLGKTYYPMNDARAYRMVGTASWYGTKFHGQATANGETYDLYGMTAAHKTLPLPSYVRVTNLDNGKSVIVRVNDRGPFYSDRVIDLSFAAAKKLGYAETGTARVKVEGIDPVQWWAQRGRPAPMVLAQPKQAVAQAAPAAAQTQAVAMAQPIETYTPPPAQHAAAVLPVQIDSKKNASLPADGLYLQVGAFANPDAAELLKAKLSGVTAAPVFISSVVRNQQILHRVRLGPIGSADEVSRTQDSIRVANLGQPTLVRPD.

A signal peptide spans 1-26; that stretch reads MSKRVRSSLILPAVCGLGLAAVLLSS. C27 carries N-palmitoyl cysteine lipidation. C27 carries S-diacylglycerol cysteine lipidation. The SPOR domain occupies 261-342; sequence SLPADGLYLQ…LGQPTLVRPD (82 aa).

The protein belongs to the RlpA family.

It localises to the cell membrane. Lytic transglycosylase with a strong preference for naked glycan strands that lack stem peptides. This chain is Endolytic peptidoglycan transglycosylase RlpA, found in Pseudomonas aeruginosa (strain ATCC 15692 / DSM 22644 / CIP 104116 / JCM 14847 / LMG 12228 / 1C / PRS 101 / PAO1).